Here is a 249-residue protein sequence, read N- to C-terminus: MEMKQINETTLKIMITMEDLEEHGMELKDFLIPQEKTEEFFYTVMDELDLPDNFKNSGMLSFRVTPRKDRVDVFVTKSDLKEALDFNDLSDMEDYSGLSPEEFLKALEDNFMDKGDIEAHHKLEEHDKTLKEVDETMTEPAKEVAEETIREDYTHYVLAFSDFDQVVTFAQGLKNVSVEGSEFYKLGDVYYMTILLYLADEPDYYANNMYARFLEYANVADRTRPYLQEHATILMEEDALPVLQATKWS.

The protein belongs to the MecA family. Homodimer.

In terms of biological role, enables the recognition and targeting of unfolded and aggregated proteins to the ClpC protease or to other proteins involved in proteolysis. The sequence is that of Adapter protein MecA from Streptococcus thermophilus (strain ATCC BAA-250 / LMG 18311).